The primary structure comprises 2326 residues: Nonribosomal peptide synthetase inpB (2326 aa).

The region spanning 8–84 (SPSEWLQLEL…SLYSMAQGPA (77 aa)) is the Carrier 1 domain. Ser45 is subject to O-(pantetheine 4'-phosphoryl)serine. The disordered stretch occupies residues 87 to 121 (ASSSTSDNASDKDSSLDDSETGALTPTTDAGSSLA). Positions 108-121 (GALTPTTDAGSSLA) are enriched in polar residues. The tract at residues 144–568 (QAVVPCSAIQ…LLSPGEVSQL (425 aa)) is condensation 1. The adenylation 1 stretch occupies residues 593 to 997 (LQPGAAAVNS…GRRDTQVKIR (405 aa)). Residues 1145 to 1221 (EPSTETEFKL…DLARAVESRV (77 aa)) form the Carrier 2 domain. An O-(pantetheine 4'-phosphoryl)serine modification is found at Ser1182. Residues 1226–1247 (DEEDPAPFSVWRESRGSEPSEE) are disordered. The interval 1266 to 1680 (EDVLPCTALQ…LLSPEDVNQL (415 aa)) is condensation 2. The tract at residues 1702–2097 (EVARSRPGAA…GRIDTQIKIR (396 aa)) is adenylation 2. Positions 2216–2294 (PPSTEMEKAL…DLAVLLEKRP (79 aa)) constitute a Carrier 3 domain. The residue at position 2253 (Ser2253) is an O-(pantetheine 4'-phosphoryl)serine.

Belongs to the NRP synthetase family.

It functions in the pathway secondary metabolite biosynthesis. Its function is as follows. Nonribosomal peptide synthetase; part of the inp gene cluster that mediates the biosynthesis of fellutamide B, a mycotoxin that acts as a proteasome inhibitor. In the first step of fellutabmide B biosynthesis inpC activates 3-hydroxydodecanoic acid to generate 3-hydroxydodecanoyl-AMP that is then loaded onto the T0 domain of inpB. The 3-hydroxydodecanoyl-S-phosphopantetheinyl-T0 is sequentially extended with L-Asn and L-Gln by the two CAT modules of inpB. The linear lipodipeptide from inpB is then transferred onto inpA for the addition of the third amino acid, L-Leu. Reductive releasing of the lipotripeptide by the TE domain of inpA produces (2S)-fellutamide B. InpF might be involved in the release and transfer of the lipodipeptide from inpB to inpA. The inp cluster-encoded proteasome subunit inpE confers resistance to internally produced fellutamides. The MFS efflux transporter inpD may contribute to fellutamide resistance as well. In Emericella nidulans (strain FGSC A4 / ATCC 38163 / CBS 112.46 / NRRL 194 / M139) (Aspergillus nidulans), this protein is Nonribosomal peptide synthetase inpB.